Here is a 718-residue protein sequence, read N- to C-terminus: Gephyrin (718 aa).

A compositionally biased stretch (polar residues) spans 1–19 (MSNTLTTERNITNSPTAAQ). The tract at residues 1–26 (MSNTLTTERNITNSPTAAQLNEKESG) is disordered. The segment at 31-176 (EWIVGVLTTS…LPGSVKAIRE (146 aa)) is MPT Mo-transferase. The segment covering 222–244 (NQNNQNNNNNNNNNNNNNNNNNS) has biased composition (low complexity). 2 disordered regions span residues 222-266 (NQNN…SSYN) and 344-364 (TGEN…NDDD). A compositionally biased stretch (basic residues) spans 245 to 254 (HNHHHHHHHS). Residues 260 to 718 (KRGSSYNMTP…KAILIGPINN (459 aa)) are MPT adenylyltransferase.

The protein in the N-terminal section; belongs to the MoaB/Mog family. This sequence in the C-terminal section; belongs to the MoeA family. Homotrimer, homodimer and homooligomer. Mg(2+) is required as a cofactor.

The protein resides in the cell membrane. Its subcellular location is the cytoplasm. The protein localises to the cytosol. It is found in the cytoskeleton. It catalyses the reaction molybdopterin + ATP + H(+) = adenylyl-molybdopterin + diphosphate. The enzyme catalyses adenylyl-molybdopterin + molybdate = Mo-molybdopterin + AMP + H(+). It participates in cofactor biosynthesis; molybdopterin biosynthesis. In terms of biological role, microtubule-associated protein involved in membrane protein-cytoskeleton interactions. Functionally, also has a catalytic activity and catalyzes two steps in the biosynthesis of the molybdenum cofactor. In the first step, molybdopterin is adenylated. Subsequently, molybdate is inserted into adenylated molybdopterin and AMP is released. The polypeptide is Gephyrin (gphn) (Dictyostelium discoideum (Social amoeba)).